Here is a 435-residue protein sequence, read N- to C-terminus: T-cell defective protein 2 (435 aa).

Positions 65–146 (NASTSFQSQP…KTPDSLRKSI (82 aa)) are disordered. The stretch at 322–352 (TKISAKKEKEQKKSAAKEAALKEAKEKEMRI) forms a coiled coil. The interval 393–419 (FFKANPPPAPRAPQAPELASGPRRIPT) is disordered.

In terms of tissue distribution, strongly expressed in the cytoplasm of the pharynx muscle cells and several head neurons, probably the IL1s or IL2s, throughout development. Also expressed in some other unidentified neurons in the tail region. Weakly expressed in the nuclei of the T-cells and the T-cell daughters. Not expressed in gonads and in P12 cell.

Its subcellular location is the nucleus. It localises to the cytoplasm. May act synergistically with the Wnt pathways to control T-cell fate specification, gonad development, and P12 cell fate specification. Required for the distribution of pop-1 and tlp-1 proteins. The sequence is that of T-cell defective protein 2 (tcl-2) from Caenorhabditis elegans.